The primary structure comprises 219 residues: MPRKAGSVEEAEAGAEEVGAEEVGPEESGGEESGAEESGPEESDPEEPGAAAEMEAGQPRPVLRSVNSCEPSQVIFCNRSPRVVLPVWLNFDGEPQPYPTLPPGTGRRIHSYRGHLWLFRDAGTYDGLLVNQTELFVPSLNVDGQPIFANITLPVYTLKERCLQVVRSLVKPENYRRLDIVRSLYEDLEDHPNVRKDLERLAQEHIENQRMEGETEDFN.

Positions 1-57 (MPRKAGSVEEAEAGAEEVGAEEVGPEESGGEESGAEESGPEESDPEEPGAAAEMEAG) are disordered. Acidic residues predominate over residues 9-47 (EEAEAGAEEVGAEEVGPEESGGEESGAEESGPEESDPEE). The segment covering 48–57 (PGAAAEMEAG) has biased composition (low complexity). Residues 157 to 166 (TLKERCLQVV) are interaction with Elongin BC complex.

Belongs to the VHL family. In terms of assembly, component of the VBC (VHL-Elongin BC-CUL2) complex; this complex acts as a ubiquitin-ligase E3 and directs proteasome-dependent degradation of targeted proteins. Interacts with CUL2; this interaction is dependent on the integrity of the trimeric VBC complex. Interacts (via the beta domain) with HIF1A (via the NTAD domain); this interaction mediates degradation of HIF1A in normoxia and, in hypoxia, prevents ubiquitination and degradation of HIF1A by mediating hypoxia-induced translocation to the nucleus, a process which requires a hypoxia-dependent regulatory signal. Interacts with ADRB2; the interaction, in normoxia, is dependent on hydroxylation of ADRB2 and the subsequent VCB-mediated ubiquitination and degradation of ADRB2. Under hypoxia, hydroxylation, interaction with VHL, ubiquitination and subsequent degradation of ADRB2 are dramatically decreased. Interacts with RNF139, USP33 and JADE1. Found in a complex composed of LIMD1, VHL, EGLN1/PHD2, ELOB and CUL2. Interacts with LIMD1 (via LIM zinc-binding 2). Interacts with AJUBA (via LIM domains) and WTIP (via LIM domains). Interacts with EPAS1. Interacts with CARD9. Interacts with DCUN1D1 independently of CUL2; this interaction engages DCUN1D1 in the VCB complex and triggers CUL2 neddylation and consequently cullin ring ligase (CRL) substrates polyubiquitylation. Interacts with ALAS1 (hydroxylated form). Interacts with IGFBP1.

Its subcellular location is the cytoplasm. The protein resides in the cell membrane. The protein localises to the endoplasmic reticulum. It localises to the nucleus. The protein operates within protein modification; protein ubiquitination. Its function is as follows. Involved in the ubiquitination and subsequent proteasomal degradation via the von Hippel-Lindau ubiquitination complex. Seems to act as a target recruitment subunit in the E3 ubiquitin ligase complex and recruits hydroxylated hypoxia-inducible factor (HIF) under normoxic conditions. Involved in transcriptional repression through interaction with HIF1A, HIF1AN and histone deacetylases. Ubiquitinates, in an oxygen-responsive manner, ADRB2. Acts as a negative regulator of mTORC1 by promoting ubiquitination and degradation of RPTOR. The chain is von Hippel-Lindau disease tumor suppressor (VHL) from Canis lupus familiaris (Dog).